Here is a 227-residue protein sequence, read N- to C-terminus: MKMVAPWTRFYSHSCCLCCHVRTGTILLGIWYLIINAVVLLILLSALADPDQYHFSGSELGGEFEFMDDANMCIAIAISLLMILICAMATYGAYKQHAAWIIPFFCYQIFDFALNTLVAITVLVYPNSIQEYIRQLPPSFPYRDDIMSVNPTCLVLVILLFIGIILTFKGYLISCVWSCYRYINGRNSSDVLVYVTSNDTTVLLPPYDDATAVTGTAKEPPPPYVSA.

A run of 4 helical transmembrane segments spans residues 26–46 (ILLG…LLSA), 72–92 (MCIA…ATYG), 100–120 (WIIP…LVAI), and 153–173 (CLVL…GYLI). The segment at 205–222 (PPYDDATAVTGTAKEPPP) is required for NEDD4 interaction.

The protein belongs to the LAPTM4/LAPTM5 transporter family. Homooligomer; upon reaching the lysosomes. Interacts with MCOLN1. Interacts with NEDD4; may play a role in the lysosomal sorting of LAPTM4B; enhances HGS association with NEDD4; mediates inhibition of EGFR degradation. Interacts with PIP5K1C; promotes SNX5 association with LAPTM4B; kinase activity of PIP5K1C is required; interaction is regulated by phosphatidylinositol 4,5-bisphosphate generated by PIP5K1C. Interacts with HGS; promotes HGS ubiquitination. Interacts with SNX5. Interacts with SLC3A2 and SLC7A5; recruits SLC3A2 and SLC7A5 to lysosomes to promote leucine uptake into these organelles and is required for mTORC1 activation. Interacts with LRRC32; decreases TGFB1 production in regulatory T cells. Interacts with BECN1; competes with EGFR for LAPTM4B binding; regulates EGFR activity. Interacts with EGFR; positively correlates with EGFR activation. In terms of processing, undergoes proteolytic cleavage following delivery to the lysosomes. Post-translationally, ubiquitinated by NEDD4.

It is found in the endomembrane system. The protein resides in the late endosome membrane. Its subcellular location is the cell membrane. The protein localises to the cell projection. It localises to the lysosome membrane. It is found in the endosome membrane. The protein resides in the endosome. Its subcellular location is the multivesicular body membrane. The protein localises to the multivesicular body lumen. Its function is as follows. Required for optimal lysosomal function. Blocks EGF-stimulated EGFR intraluminal sorting and degradation. Conversely by binding with the phosphatidylinositol 4,5-bisphosphate, regulates its PIP5K1C interaction, inhibits HGS ubiquitination and relieves LAPTM4B inhibition of EGFR degradation. Recruits SLC3A2 and SLC7A5 (the Leu transporter) to the lysosome, promoting entry of leucine and other essential amino acid (EAA) into the lysosome, stimulating activation of proton-transporting vacuolar (V)-ATPase protein pump (V-ATPase) and hence mTORC1 activation. Plays a role as negative regulator of TGFB1 production in regulatory T cells. Binds ceramide and facilitates its exit from late endosome in order to control cell death pathways. The protein is Lysosomal-associated transmembrane protein 4B of Rattus norvegicus (Rat).